The primary structure comprises 927 residues: Protein translocase subunit SecA (927 aa).

ATP is bound by residues Gln-86, 104-108 (GEGKT), and Asp-494. Residues 853-927 (YTAPDEDGTP…GSKAKRGKRR (75 aa)) are disordered. Residues 860–879 (GTPHAEVEAVDPGARERTSE) are compositionally biased toward basic and acidic residues. Basic residues predominate over residues 907 to 927 (RAKRRGASARSGSKAKRGKRR).

It belongs to the SecA family. As to quaternary structure, monomer and homodimer. Part of the essential Sec protein translocation apparatus which comprises SecA, SecYEG and auxiliary proteins SecDF. Other proteins may also be involved.

It is found in the cell membrane. It localises to the cytoplasm. It carries out the reaction ATP + H2O + cellular proteinSide 1 = ADP + phosphate + cellular proteinSide 2.. Its function is as follows. Part of the Sec protein translocase complex. Interacts with the SecYEG preprotein conducting channel. Has a central role in coupling the hydrolysis of ATP to the transfer of proteins into and across the cell membrane, serving as an ATP-driven molecular motor driving the stepwise translocation of polypeptide chains across the membrane. The chain is Protein translocase subunit SecA from Kocuria rhizophila (strain ATCC 9341 / DSM 348 / NBRC 103217 / DC2201).